The chain runs to 414 residues: Probable mannose-1-phosphate guanyltransferase (414 aa).

This sequence belongs to the transferase hexapeptide repeat family.

It localises to the cytoplasm. The protein resides in the nucleus. The catalysed reaction is alpha-D-mannose 1-phosphate + GTP + H(+) = GDP-alpha-D-mannose + diphosphate. It functions in the pathway nucleotide-sugar biosynthesis; GDP-alpha-D-mannose biosynthesis; GDP-alpha-D-mannose from alpha-D-mannose 1-phosphate (GTP route): step 1/1. In terms of biological role, involved in cell wall synthesis where it is required for glycosylation. In Schizosaccharomyces pombe (strain 972 / ATCC 24843) (Fission yeast), this protein is Probable mannose-1-phosphate guanyltransferase.